A 153-amino-acid polypeptide reads, in one-letter code: Cytochrome c-type biogenesis protein CcmE (153 aa).

The Cytoplasmic portion of the chain corresponds to 1–8 (MMTPRQRR). The helical; Signal-anchor for type II membrane protein transmembrane segment at 9-29 (MTWVALMVAGVSLAAFFALTA) threads the bilayer. The Periplasmic portion of the chain corresponds to 30–153 (FQKNLLYFYT…PADYSEYRKK (124 aa)). Heme contacts are provided by His124 and Tyr128. Residues 134–153 (AESLKKNGGLPADYSEYRKK) are disordered.

The protein belongs to the CcmE/CycJ family.

The protein resides in the cell inner membrane. Heme chaperone required for the biogenesis of c-type cytochromes. Transiently binds heme delivered by CcmC and transfers the heme to apo-cytochromes in a process facilitated by CcmF and CcmH. In Methylococcus capsulatus (strain ATCC 33009 / NCIMB 11132 / Bath), this protein is Cytochrome c-type biogenesis protein CcmE.